Here is a 343-residue protein sequence, read N- to C-terminus: S-adenosylmethionine:tRNA ribosyltransferase-isomerase (343 aa).

The protein belongs to the QueA family. Monomer.

It localises to the cytoplasm. It carries out the reaction 7-aminomethyl-7-carbaguanosine(34) in tRNA + S-adenosyl-L-methionine = epoxyqueuosine(34) in tRNA + adenine + L-methionine + 2 H(+). It functions in the pathway tRNA modification; tRNA-queuosine biosynthesis. Transfers and isomerizes the ribose moiety from AdoMet to the 7-aminomethyl group of 7-deazaguanine (preQ1-tRNA) to give epoxyqueuosine (oQ-tRNA). This Coxiella burnetii (strain Dugway 5J108-111) protein is S-adenosylmethionine:tRNA ribosyltransferase-isomerase.